The primary structure comprises 714 residues: Hormonally up-regulated neu tumor-associated kinase (714 aa).

Over residues 1 to 15 (MPAAAGDGLLGEPAA) the composition is skewed to low complexity. A disordered region spans residues 1–26 (MPAAAGDGLLGEPAAPGGGGGAEDAA). The region spanning 62 to 320 (LIGSRKLGEG…IQQALANRWL (259 aa)) is the Protein kinase domain. ATP is bound by residues 68-76 (LGEGSFAKV) and Lys-91. The active-site Proton acceptor is the Asp-186. Over residues 437–461 (KKPKEQEKRGDFLHRPFSKKLDKNL) the composition is skewed to basic and acidic residues. 3 disordered regions span residues 437 to 471 (KKPK…SGSL), 518 to 552 (MEFI…HKED), and 590 to 615 (ARRN…HTPL). Over residues 599 to 611 (LSPGLPSGSMSPL) the composition is skewed to low complexity.

It belongs to the protein kinase superfamily. CAMK Ser/Thr protein kinase family. SNF1 subfamily.

It catalyses the reaction L-seryl-[protein] + ATP = O-phospho-L-seryl-[protein] + ADP + H(+). The catalysed reaction is L-threonyl-[protein] + ATP = O-phospho-L-threonyl-[protein] + ADP + H(+). The chain is Hormonally up-regulated neu tumor-associated kinase (HUNK) from Homo sapiens (Human).